A 479-amino-acid polypeptide reads, in one-letter code: ATP-dependent RNA helicase DDX19B (479 aa).

A2 carries the post-translational modification N-acetylalanine. The interval 2-300 (ATDSWALAVD…DPNVIKLKRE (299 aa)) is N-terminal lobe. The segment at 34-54 (TNGAVVKTNANAEKTDEEEKE) is disordered. Residues 55–68 (DRAAQSLLNKLIRS) are N-terminal helix. Positions 92–120 (KSFEELRLKPQLLQGVYAMGFNRPSKIQE) match the Q motif motif. ATP is bound by residues Q119 and 138–145 (SQSGTGKT). One can recognise a Helicase ATP-binding domain in the interval 125 to 295 (LMLAEPPQNL…QKVVPDPNVI (171 aa)). The DEAD box motif lies at 242–245 (DEAD). The segment at 301-479 (EETLDTIKQY…DLDEIEKIAN (179 aa)) is C-terminal lobe. The Helicase C-terminal domain occupies 306-474 (TIKQYYVLCS…RLDTDDLDEI (169 aa)). Residues R429 and R432 each contribute to the ATP site.

This sequence belongs to the DEAD box helicase family. DDX19/DBP5 subfamily. As to quaternary structure, associates with the nuclear pore complex via interaction with NUP214. Interacts with NUP214 or RNA in a mutually exclusive manner.

The protein resides in the cytoplasm. It localises to the nucleus. It is found in the nucleoplasm. It carries out the reaction ATP + H2O = ADP + phosphate + H(+). ATP-dependent RNA helicase involved in mRNA export from the nucleus. Rather than unwinding RNA duplexes, DDX19B functions as a remodeler of ribonucleoprotein particles, whereby proteins bound to nuclear mRNA are dissociated and replaced by cytoplasmic mRNA binding proteins. This chain is ATP-dependent RNA helicase DDX19B (DDX19B), found in Homo sapiens (Human).